The chain runs to 357 residues: GTPase Obg (357 aa).

An Obg domain is found at 1-159 (MKFVDEAFID…KSLKLELKVL (159 aa)). In terms of domain architecture, OBG-type G spans 160–334 (ADVGLLGMPN…LVQSIFQHVH (175 aa)). GTP-binding positions include 166–173 (GMPNAGKS), 191–195 (FTTLH), 213–216 (DIPG), 284–287 (NKLD), and 315–317 (SAL). Residues Ser173 and Thr193 each contribute to the Mg(2+) site.

This sequence belongs to the TRAFAC class OBG-HflX-like GTPase superfamily. OBG GTPase family. In terms of assembly, monomer. Mg(2+) serves as cofactor.

The protein resides in the cytoplasm. An essential GTPase which binds GTP, GDP and possibly (p)ppGpp with moderate affinity, with high nucleotide exchange rates and a fairly low GTP hydrolysis rate. Plays a role in control of the cell cycle, stress response, ribosome biogenesis and in those bacteria that undergo differentiation, in morphogenesis control. In Acidovorax sp. (strain JS42), this protein is GTPase Obg.